The following is a 398-amino-acid chain: Argininosuccinate synthase (398 aa).

Residue 8–16 coordinates ATP; that stretch reads AYSGGLDTS. Position 87 (Tyr-87) interacts with L-citrulline. Gly-117 is a binding site for ATP. Positions 119, 123, and 124 each coordinate L-aspartate. Asn-123 serves as a coordination point for L-citrulline. Positions 127, 175, 260, and 272 each coordinate L-citrulline.

It belongs to the argininosuccinate synthase family. Type 1 subfamily. As to quaternary structure, homotetramer.

It localises to the cytoplasm. The enzyme catalyses L-citrulline + L-aspartate + ATP = 2-(N(omega)-L-arginino)succinate + AMP + diphosphate + H(+). It participates in amino-acid biosynthesis; L-arginine biosynthesis; L-arginine from L-ornithine and carbamoyl phosphate: step 2/3. This Mycobacterium marinum (strain ATCC BAA-535 / M) protein is Argininosuccinate synthase.